The primary structure comprises 405 residues: Potassium channel subfamily K member 13 (405 aa).

The Cytoplasmic segment spans residues 1 to 19; that stretch reads MAGRGCGCSPGHLNEDNAR. The chain crosses the membrane as a helical span at residues 20–40; the sequence is FLLLAGLILLYLLGGAAVFSA. N-linked (GlcNAc...) asparagine glycosylation is found at N59 and N65. The segment at residues 95–115 is an intramembrane region (pore-forming); the sequence is WDFTGAFYFVGTVVSTIGFGM. T110, I111, and G112 together coordinate K(+). Positions 110 to 115 are selectivity filter 1; sequence TIGFGM. Residues 125-145 form a helical membrane-spanning segment; it reads IFLIFYGLIGCASTILFFNLF. Topologically, residues 146–193 are cytoplasmic; sequence LERLITVIACVMRSCHQQQLRRRGAVTQDNMKAPEKGEADSLTGWKPS. The helical transmembrane segment at 194-214 threads the bilayer; it reads VYYVMLILCLASVAISCGASA. Positions 224–244 form an intramembrane region, pore-forming; the sequence is YFDSVYFCFVAFSTIGFGDLV. The K(+) site is built by T237, I238, G239, and F240. The interval 237-242 is selectivity filter 2; sequence TIGFGD. The helical transmembrane segment at 263–283 threads the bilayer; it reads FLILMGVCCIYSLFNVISILI. Residues 284 to 405 are Cytoplasmic-facing; that stretch reads KQTVNWILRK…NRLAETSGDR (122 aa).

It belongs to the two pore domain potassium channel (TC 1.A.1.8) family. In terms of assembly, homodimer. Heterodimer with KCNK12.

It localises to the cell membrane. The enzyme catalyses K(+)(in) = K(+)(out). K(+) channel that conducts outward rectifying tonic currents potentiated by purinergic signals. Homo- and heterodimerizes to form functional channels with distinct regulatory and gating properties. Contributes most of K(+) currents at the plasma membrane of resting microglia. Maintains a depolarized membrane potential required for proper ramified microglia morphology and phagocytosis, selectively mediating microglial pruning of presynaptic compartments at hippocampal excitatory synapses. Upon local release of ATP caused by neuronal injury or infection, it is potentiated by P2RY12 and P2RX7 receptor signaling and contributes to ATP-triggered K(+) efflux underlying microglial NLRP3 inflammasome assembly and IL1B release. The sequence is that of Potassium channel subfamily K member 13 from Mus musculus (Mouse).